The primary structure comprises 566 residues: Chromatin assembly factor 1 subunit B (566 aa).

WD repeat units follow at residues 11–54, 64–103, 127–166, 169–208, 228–279, and 351–392; these read HNKE…DGKA, RHTK…ELEP, GHLE…KVSI, EHKS…VAFN, FHDD…RPMG, and IHYH…IPLK. Disordered stretches follow at residues 411–481 and 501–566; these read KSQP…NQPR and IPLK…KPNK. 2 stretches are compositionally biased toward polar residues: residues 425 to 437 and 469 to 478; these read TEGT…TLQP and QPASQSTKVN.

Belongs to the WD repeat HIR1 family. As to quaternary structure, interacts with CHAF1A.

Its subcellular location is the nucleus. Its function is as follows. Acts as a component of the histone chaperone complex chromatin assembly factor 1 (CAF-1), which assembles histone octamers onto DNA during replication and repair. CAF-1 performs the first step of the nucleosome assembly process, bringing newly synthesized histones H3 and H4 to replicating DNA; histones H2A/H2B can bind to this chromatin precursor subsequent to DNA replication to complete the histone octamer. This is Chromatin assembly factor 1 subunit B (CHAF1B) from Gallus gallus (Chicken).